The chain runs to 273 residues: Thiazole synthase (273 aa).

Lys-113 acts as the Schiff-base intermediate with DXP in catalysis. 1-deoxy-D-xylulose 5-phosphate contacts are provided by residues Gly-174, 201–202 (AG), and 223–224 (NT).

This sequence belongs to the ThiG family. In terms of assembly, homotetramer. Forms heterodimers with either ThiH or ThiS.

Its subcellular location is the cytoplasm. It catalyses the reaction [ThiS sulfur-carrier protein]-C-terminal-Gly-aminoethanethioate + 2-iminoacetate + 1-deoxy-D-xylulose 5-phosphate = [ThiS sulfur-carrier protein]-C-terminal Gly-Gly + 2-[(2R,5Z)-2-carboxy-4-methylthiazol-5(2H)-ylidene]ethyl phosphate + 2 H2O + H(+). It participates in cofactor biosynthesis; thiamine diphosphate biosynthesis. Its function is as follows. Catalyzes the rearrangement of 1-deoxy-D-xylulose 5-phosphate (DXP) to produce the thiazole phosphate moiety of thiamine. Sulfur is provided by the thiocarboxylate moiety of the carrier protein ThiS. In vitro, sulfur can be provided by H(2)S. The polypeptide is Thiazole synthase (Salinibacter ruber (strain DSM 13855 / M31)).